Here is a 418-residue protein sequence, read N- to C-terminus: Histidine--tRNA ligase (418 aa).

This sequence belongs to the class-II aminoacyl-tRNA synthetase family. In terms of assembly, homodimer.

It localises to the cytoplasm. The enzyme catalyses tRNA(His) + L-histidine + ATP = L-histidyl-tRNA(His) + AMP + diphosphate + H(+). This Thermoanaerobacter sp. (strain X514) protein is Histidine--tRNA ligase.